The sequence spans 141 residues: Large ribosomal subunit protein uL11 (141 aa).

This sequence belongs to the universal ribosomal protein uL11 family. As to quaternary structure, part of the ribosomal stalk of the 50S ribosomal subunit. Interacts with L10 and the large rRNA to form the base of the stalk. L10 forms an elongated spine to which L12 dimers bind in a sequential fashion forming a multimeric L10(L12)X complex. Post-translationally, one or more lysine residues are methylated.

Forms part of the ribosomal stalk which helps the ribosome interact with GTP-bound translation factors. This Parasynechococcus marenigrum (strain WH8102) protein is Large ribosomal subunit protein uL11.